Reading from the N-terminus, the 415-residue chain is MRLFYRLLKQPVPKQIERYSRFSPSPLSIKQFLDFGRDNACEKTSYMFLRKELPVRLANTMREVNLLPDNLLNRPSVGLVQSWYMQSFLELLEYENKSPEDPRVLDNFLNVLINIRNRHNDVVPTMAQGVIEYKEKFGFDPFISSNIQYFLDRFYTNRISFRMLINQHTLLFGGDTNPAHPKHIGSIDPTCNVADVVKDAYETAKMLCEQYYLVAPELEVEEFNAKAPNKPIQVVYVPSHLFHMLFELFKNSMRATVELHEDKKEGYPAVKTLVTLGKEDLSIKISDLGGGVPLRKIDRLFNYMYSTAPRPSLEPTRAAPLAGFGYGLPISRLYARYFQGDLKLYSMEGVGTDAVIYLKALSSESFERLPVFNKSAWRHYKTTPEADDWSNPSSEPRDASKYKAKQDKIKSNRTF.

The Histidine kinase domain occupies 131-362 (IEYKEKFGFD…DAVIYLKALS (232 aa)). ATP is bound at residue 247–254 (ELFKNSMR). Lys278 is modified (N6-succinyllysine). ATP contacts are provided by residues Asp287, 306-307 (ST), and 323-328 (GFGYGL). The interval 383 to 415 (TPEADDWSNPSSEPRDASKYKAKQDKIKSNRTF) is disordered. The span at 395 to 415 (EPRDASKYKAKQDKIKSNRTF) shows a compositional bias: basic and acidic residues.

Belongs to the PDK/BCKDK protein kinase family. In terms of assembly, homodimer. Interacts with the pyruvate dehydrogenase complex subunit DLAT, and is part of the multimeric pyruvate dehydrogenase complex that contains multiple copies of pyruvate dehydrogenase (E1), dihydrolipoamide acetyltransferase (DLAT, E2) and lipoamide dehydrogenase (DLD, E3).

It localises to the mitochondrion matrix. It catalyses the reaction L-seryl-[pyruvate dehydrogenase E1 alpha subunit] + ATP = O-phospho-L-seryl-[pyruvate dehydrogenase E1 alpha subunit] + ADP + H(+). Functionally, inhibits pyruvate dehydrogenase activity by phosphorylation of the E1 subunit PDHA1, and thereby regulates glucose metabolism and aerobic respiration. Can also phosphorylate PDHA2. Decreases glucose utilization and increases fat metabolism in response to prolonged fasting, and as adaptation to a high-fat diet. Plays a role in glucose homeostasis and in maintaining normal blood glucose levels in function of nutrient levels and under starvation. Plays a role in the generation of reactive oxygen species. The chain is [Pyruvate dehydrogenase (acetyl-transferring)] kinase isozyme 3, mitochondrial (Pdk3) from Mus musculus (Mouse).